Reading from the N-terminus, the 911-residue chain is Gag-Pro polyprotein (911 aa).

A propeptide spanning residues 101-161 is cleaved from the precursor; the sequence is AAVAQTEEIL…TKKPKRFPVL (61 aa). Composition is skewed to polar residues over residues 113 to 125 and 140 to 152; these read NSQT…SQNP and KSSS…LSST. Residues 113 to 178 form a disordered region; the sequence is NSQTDLTKTS…DPEDPNPSEV (66 aa). Residues 202–205 carry the PPXY motif motif; sequence PPPY. The PTAP/PSAP motif motif lies at 210 to 213; the sequence is PSAP. Residues 216 to 257 adopt a coiled-coil conformation; sequence MAVVNPKEELKEKIAQLEEQIKLEELHQALISKLQKLKTGNE. A disordered region spans residues 260 to 279; sequence THPDTAGGLSRTPHWPGQHI. CCHC-type zinc fingers lie at residues 547–564 and 576–593; these read GCCF…NCHE and GLCP…ECKS. A disordered region spans residues 592–626; the sequence is KSKTDNQGNPIPPHQGNRVEGPAPGPETSLWGSQL. In terms of domain architecture, Peptidase A2 spans 780–856; that stretch reads FTGLIDTGAD…LPVNLWGRDL (77 aa). D785 (protease; shared with dimeric partner) is an active-site residue. The G-patch domain occupies 867-911; the sequence is PNDIVTAQMLAQGYSPGKGLGKKENGILHPIPNQGQSNKKGFGNF.

In terms of assembly, homodimer. Interacts with the reverse transcriptase/ribonuclease H. As to quaternary structure, homotrimer. Post-translationally, released by autocatalytic processing. The protease can undergo further autoprocessing to yield 2 shorter but enzymatically active forms of 12 kDa and 13 kDa without the GDP domain. the 12 kDa form is monomeric. Myristoylated. Myristoylation of the matrix (MA) domain mediates the transport and binding of Gag polyproteins to the host plasma membrane and is required for the assembly of viral particles. In terms of processing, specific enzymatic cleavages in vivo yield mature proteins.

The protein localises to the virion. The enzyme catalyses dUTP + H2O = dUMP + diphosphate + H(+). Matrix protein. Its function is as follows. Nucleocapsid protein p14: Nucleocapsid protein. Functionally, capsid protein. In terms of biological role, the aspartyl protease mediates proteolytic cleavages of Gag and Gag-Pol polyproteins during or shortly after the release of the virion from the plasma membrane. Cleavages take place as an ordered, step-wise cascade to yield mature proteins. This process is called maturation. Displays maximal activity during the budding process just prior to particle release from the cell. Enhances the activity of the reverse transcriptase. May be part of the mature RT. The protein is Gag-Pro polyprotein (gag-pro) of Mason-Pfizer monkey virus (MPMV).